A 23-amino-acid polypeptide reads, in one-letter code: Clavanin-B (23 aa).

Position 23 is a phenylalanine amide (Phe23).

The protein resides in the secreted. Functionally, has antimicrobial activity. The chain is Clavanin-B from Styela clava (Sea squirt).